A 416-amino-acid chain; its full sequence is 4-hydroxy-3-methylbut-2-en-1-yl diphosphate synthase (flavodoxin) (416 aa).

[4Fe-4S] cluster is bound by residues cysteine 304, cysteine 307, cysteine 350, and glutamate 357.

It belongs to the IspG family. The cofactor is [4Fe-4S] cluster.

The enzyme catalyses (2E)-4-hydroxy-3-methylbut-2-enyl diphosphate + oxidized [flavodoxin] + H2O + 2 H(+) = 2-C-methyl-D-erythritol 2,4-cyclic diphosphate + reduced [flavodoxin]. The protein operates within isoprenoid biosynthesis; isopentenyl diphosphate biosynthesis via DXP pathway; isopentenyl diphosphate from 1-deoxy-D-xylulose 5-phosphate: step 5/6. Its function is as follows. Converts 2C-methyl-D-erythritol 2,4-cyclodiphosphate (ME-2,4cPP) into 1-hydroxy-2-methyl-2-(E)-butenyl 4-diphosphate. In Agrobacterium fabrum (strain C58 / ATCC 33970) (Agrobacterium tumefaciens (strain C58)), this protein is 4-hydroxy-3-methylbut-2-en-1-yl diphosphate synthase (flavodoxin).